A 603-amino-acid chain; its full sequence is MQTQHTKVTQTHFLLWILLLCMPFGKSHTEEDFIITTKTGRVRGLSMPVLGGTVTAFLGIPYAQPPLGSLRFKKPQPLNKWPDIHNATQYANSCYQNIDQAFPGFQGSEMWNPNTNLSEDCLYLNVWIPVPKPKNATVMVWIYGGGFQTGTSSLPVYDGKFLARVERVIVVSMNYRVGALGFLAFPGNPDAPGNMGLFDQQLALQWVQRNIAAFGGNPKSITIFGESAGAASVSLHLLCPQSYPLFTRAILESGSSNAPWAVKHPEEARNRTLTLAKFTGCSKENEMEMIKCLRSKDPQEILRNERFVLPSDSILSINFGPTVDGDFLTDMPHTLLQLGKVKKAQILVGVNKDEGTAFLVYGAPGFSKDNDSLITRKEFQEGLNMYFPGVSRLGKEAVLFYYVDWLGEQSPEVYRDALDDVIGDYNIICPALEFTKKFAELENNAFFYFFEHRSSKLPWPEWMGVMHGYEIEFVFGLPLGRRVNYTRAEEIFSRSIMKTWANFAKYGHPNGTQGNSTMWPVFTSTEQKYLTLNTEKSKIYSKLRAPQCQFWRLFFPKVLEMTGDIDETEQEWKAGFHRWSNYMMDWQNQFNDYTSKKESCTAL.

Positions M1–T29 are cleaved as a signal peptide. The N-linked (GlcNAc...) asparagine glycan is linked to N86. The cysteines at positions 94 and 121 are disulfide-linked. N135 is a glycosylation site (N-linked (GlcNAc...) asparagine). Position 145-146 (G145–G146) interacts with substrate. Residue S227 is the Acyl-ester intermediate of the active site. S227 carries the phosphoserine modification. N270 carries an N-linked (GlcNAc...) asparagine glycan. C281 and C292 are joined by a disulfide. Residue E354 is the Charge relay system of the active site. N370 carries N-linked (GlcNAc...) asparagine glycosylation. The cysteines at positions 429 and 548 are disulfide-linked. H467 functions as the Charge relay system in the catalytic mechanism. N-linked (GlcNAc...) asparagine glycosylation is found at N484, N510, and N515.

This sequence belongs to the type-B carboxylesterase/lipase family. Homotetramer; disulfide-linked. Dimer of dimers. In terms of tissue distribution, present in most cells except erythrocytes.

It localises to the secreted. It catalyses the reaction an acylcholine + H2O = a carboxylate + choline + H(+). Esterase with broad substrate specificity. Contributes to the inactivation of the neurotransmitter acetylcholine. Can degrade neurotoxic organophosphate esters. The polypeptide is Cholinesterase (Bche) (Mus musculus (Mouse)).